The following is a 556-amino-acid chain: MNTPSSPAHFIRNIIEEDNRTGKWNGRVETRFPPEPNGYLHIGHAKSICLNFGLALEYGGVCHLRFDDTNPEKEAQEYVDAIIESVRWLGFDWKEHLYYASDYFDQLYEFAEYLITQGKAYVDSLSADEIRRLRGTLTEAGTNSPYRDRSAEENLDLFRRMRAGEFPDGVHVLRARIDMASPNINLRDPVIYRIRHIHHQRTGDKWCIYPMYDYTHCISDALERITHSLCTLEFEDHRPLYDWVLDQLAEKIPCHPQQIEFARLNLTYSVMSKRKLIDLVENKLVDGWNDPRMNTLAGLRRRGYTPESIRLFAERIGISKADSWIDMTILEDCLREDLNERALRRIAVLDPVSLIIDNFPDGHEETCYAPNHPQKPELGTRELRLTKQLYIDREDFMEIPNKGFFRLAPGAEVRLRYAFIIKCTHVVKDDQGKILEIHCVYDPDTKSGTAGAETRKVRGNIHWLSATYAKAVEIRLYDRLFIDSHPDTEGKDFKISLNPNSKEVITGYVEPSLCEAQPEQRFQFERHGYFVADLADTGPGKPIFNRTVSLRNTWKK.

Residues 34–44 carry the 'HIGH' region motif; it reads PEPNGYLHIGH. ATP is bound by residues 35 to 37 and 41 to 47; these read EPN and HIGHAKS. D67 and Y212 together coordinate L-glutamine. Residues T231, 263 to 264, and 271 to 273 each bind ATP; these read RL and MSK. Residues 270 to 274 carry the 'KMSKS' region motif; sequence VMSKR.

Belongs to the class-I aminoacyl-tRNA synthetase family. As to quaternary structure, monomer.

It is found in the cytoplasm. The enzyme catalyses tRNA(Gln) + L-glutamine + ATP = L-glutaminyl-tRNA(Gln) + AMP + diphosphate. This is Glutamine--tRNA ligase from Nitrosomonas europaea (strain ATCC 19718 / CIP 103999 / KCTC 2705 / NBRC 14298).